The sequence spans 169 residues: 6,7-dimethyl-8-ribityllumazine synthase (169 aa).

5-amino-6-(D-ribitylamino)uracil-binding positions include phenylalanine 24, 58–60 (ALE), and 82–84 (AVI). 87 to 88 (ET) is a (2S)-2-hydroxy-3-oxobutyl phosphate binding site. Histidine 90 functions as the Proton donor in the catalytic mechanism. Asparagine 115 contacts 5-amino-6-(D-ribitylamino)uracil. Arginine 129 is a (2S)-2-hydroxy-3-oxobutyl phosphate binding site.

The protein belongs to the DMRL synthase family.

It catalyses the reaction (2S)-2-hydroxy-3-oxobutyl phosphate + 5-amino-6-(D-ribitylamino)uracil = 6,7-dimethyl-8-(1-D-ribityl)lumazine + phosphate + 2 H2O + H(+). It participates in cofactor biosynthesis; riboflavin biosynthesis; riboflavin from 2-hydroxy-3-oxobutyl phosphate and 5-amino-6-(D-ribitylamino)uracil: step 1/2. In terms of biological role, catalyzes the formation of 6,7-dimethyl-8-ribityllumazine by condensation of 5-amino-6-(D-ribitylamino)uracil with 3,4-dihydroxy-2-butanone 4-phosphate. This is the penultimate step in the biosynthesis of riboflavin. The sequence is that of 6,7-dimethyl-8-ribityllumazine synthase from Burkholderia vietnamiensis (strain G4 / LMG 22486) (Burkholderia cepacia (strain R1808)).